The chain runs to 361 residues: Molybdopterin synthase catalytic subunit (361 aa).

Residues 101-102, Lys117, and 124-126 contribute to the substrate site; these read HR and KKE.

It belongs to the MoaE family. MOCS2B subfamily. In terms of assembly, heterotetramer; composed of 2 small (Mocs2A) and 2 large (Mocs2B) subunits.

It localises to the cytoplasm. It catalyses the reaction 2 [molybdopterin-synthase sulfur-carrier protein]-C-terminal-Gly-aminoethanethioate + cyclic pyranopterin phosphate + H2O = molybdopterin + 2 [molybdopterin-synthase sulfur-carrier protein]-C-terminal Gly-Gly + 2 H(+). The protein operates within cofactor biosynthesis; molybdopterin biosynthesis. In terms of biological role, catalytic subunit of the molybdopterin synthase complex, a complex that catalyzes the conversion of precursor Z into molybdopterin. Acts by mediating the incorporation of 2 sulfur atoms from thiocarboxylated Mocs2A into precursor Z to generate a dithiolene group. The protein is Molybdopterin synthase catalytic subunit of Drosophila persimilis (Fruit fly).